The primary structure comprises 152 residues: ALK and LTK ligand 1 (152 aa).

The first 23 residues, 1–23, serve as a signal peptide directing secretion; that stretch reads MRAEKRWHILLSMILLLITSSQC. Cystine bridges form between cysteine 113–cysteine 149 and cysteine 127–cysteine 136.

It belongs to the ALKAL family. As to expression, expressed at low level in the notochord and iridophore stripes, the eye and the swim bladder.

It localises to the secreted. The protein localises to the cell membrane. Functionally, cytokine that acts as a physiological ligand for receptor tyrosine kinases LTK and ALK. Required for iridophore development in the adult eye by acting as a receptor for LTK. The polypeptide is ALK and LTK ligand 1 (Danio rerio (Zebrafish)).